We begin with the raw amino-acid sequence, 158 residues long: MNVVQGNIESKNAKVAIVVSRFNSFVVDSLLNGAVDTLKRFGQVADENITVVKVPGAVELPLAARRVAACGKFDGIIALGAVIRGGTPHFDFVAGECNKGLAQVALEFDIPVSFGVLTTDTIEQAIERSGTKAGNKGGEAALGLLEMVNVLQALEEQL.

Residues Phe22, 57–59, and 81–83 each bind 5-amino-6-(D-ribitylamino)uracil; these read AVE and AVI. 86 to 87 lines the (2S)-2-hydroxy-3-oxobutyl phosphate pocket; sequence GT. His89 serves as the catalytic Proton donor. 5-amino-6-(D-ribitylamino)uracil is bound at residue Phe114. Arg128 contributes to the (2S)-2-hydroxy-3-oxobutyl phosphate binding site.

The protein belongs to the DMRL synthase family. In terms of assembly, forms an icosahedral capsid composed of 60 subunits, arranged as a dodecamer of pentamers.

The catalysed reaction is (2S)-2-hydroxy-3-oxobutyl phosphate + 5-amino-6-(D-ribitylamino)uracil = 6,7-dimethyl-8-(1-D-ribityl)lumazine + phosphate + 2 H2O + H(+). The protein operates within cofactor biosynthesis; riboflavin biosynthesis; riboflavin from 2-hydroxy-3-oxobutyl phosphate and 5-amino-6-(D-ribitylamino)uracil: step 1/2. Its function is as follows. Catalyzes the formation of 6,7-dimethyl-8-ribityllumazine by condensation of 5-amino-6-(D-ribitylamino)uracil with 3,4-dihydroxy-2-butanone 4-phosphate. This is the penultimate step in the biosynthesis of riboflavin. This Shewanella halifaxensis (strain HAW-EB4) protein is 6,7-dimethyl-8-ribityllumazine synthase.